A 112-amino-acid polypeptide reads, in one-letter code: Putative galactitol utilization operon repressor (112 aa).

One can recognise an HTH deoR-type domain in the interval 5 to 60 (SFERRNKIIQLVNEQGTVLVQDLAGVFAASEATIRADLRFLEQKGVVTRFHGGAAK). Positions 22-41 (VLVQDLAGVFAASEATIRAD) form a DNA-binding region, H-T-H motif.

In terms of biological role, repressor of the gat operon for galacticol transport and metabolism. In K12 strains the operon is constitutively expressed because this gene is inactive. This chain is Putative galactitol utilization operon repressor (gatR), found in Escherichia coli (strain K12).